Consider the following 768-residue polypeptide: Ral guanine nucleotide dissociation stimulator-like 1 (768 aa).

One can recognise an N-terminal Ras-GEF domain in the interval 65-196 (KIRTIKAGTL…RAQNLLEQFQ (132 aa)). Positions 232–501 (SEDLVAEQLT…YALSCEIEAA (270 aa)) constitute a Ras-GEF domain. A Phosphoserine modification is found at serine 520. Residues 528-623 (MITSPTPTKE…PPSCNNNPKI (96 aa)) are disordered. Low complexity-rich tracts occupy residues 541-561 (STAS…SCES), 586-596 (ESSSSCSSIHS), and 605-621 (SSLI…NNNP). The Ras-associating domain maps to 648 to 735 (DTCIIRISVE…FDFILRKKNS (88 aa)).

Interacts with Ras. As to expression, expressed in a wide variety of tissues with strong expression being seen in the heart, brain, kidney, spleen and testis.

In terms of biological role, probable guanine nucleotide exchange factor. This chain is Ral guanine nucleotide dissociation stimulator-like 1 (RGL1), found in Homo sapiens (Human).